We begin with the raw amino-acid sequence, 87 residues long: Class II metallothionein-like protein 1A (87 aa).

The protein belongs to the metallothionein superfamily. Type 15 family. Expressed in developing seeds.

In terms of biological role, metallothioneins have a high content of cysteine residues that bind various heavy metals. This chain is Class II metallothionein-like protein 1A (MT21A), found in Oryza sativa subsp. japonica (Rice).